A 196-amino-acid chain; its full sequence is Pyroglutamyl-peptidase 1-like protein (196 aa).

Residues glutamate 65, cysteine 127, and histidine 146 contribute to the active site.

Belongs to the peptidase C15 family.

This is Pyroglutamyl-peptidase 1-like protein (PGPEP1L) from Homo sapiens (Human).